We begin with the raw amino-acid sequence, 277 residues long: Probable cytochrome c oxidase subunit 3 (277 aa).

A run of 6 helical transmembrane segments spans residues 20–40 (PWPI…VSFM), 45–65 (FNHY…YSWW), 88–108 (IGMA…FASF), 173–193 (CVTA…MQAY), 211–231 (FYLA…FLIV), and 255–275 (AWYW…VYIF).

Belongs to the cytochrome c oxidase subunit 3 family.

The protein localises to the cell membrane. The catalysed reaction is 4 Fe(II)-[cytochrome c] + O2 + 8 H(+)(in) = 4 Fe(III)-[cytochrome c] + 2 H2O + 4 H(+)(out). This is Probable cytochrome c oxidase subunit 3 (ctaE) from Rickettsia bellii (strain RML369-C).